The sequence spans 663 residues: MALCYGTFWGYPKMLEAANLMEGLVDIGPWVTLPRGQPEVLEWGLPKDQDSVAFEDVAVNFTHEEWALLGPSQKNLYRDVMRETIRNLNCIGMKWENQNIDDQHQNLRRNPRCDVVERFGKSKDGSQCGETLSQIRNSIVNKNTPARVDACGSSVNGEVIMGHSSLNCYIRVDTGHKHRECHEYAEKSYTHKQCGKGLSYRHSFQTCERPHTGKKPYDCKECGKTFSSPGNLRRHMVVKGGDGPYKCELCGKAFFWPSLLRMHERTHTGEKPYECKQCSKAFPVYSSYLRHEKIHTGEKPYECKQCSKAFPDYSSYLRHERTHTGEKPYKCKQCGKAFSVSGSLRVHERIHTGEKPYTCKQCGKAFCHLGSFQRHMIMHSGDGPHKCKICGKGFDFPGSARIHEGTHTLEKPYECKQCGKLLSHRSSFRRHMMAHTGDGPHKCTVCGKAFDSPSVFQRHERTHTGEKPYECKQCGKAFRTSSSLRKHETTHTGEQPYKCKCGKAFSDLFSFQSHETTHSEEEPYECKECGKAFSSFKYFCRHERTHSEEKSYECQICGKAFSRFSYLKTHERTHTAEKPYECKQCRKAFFWPSFLLRHERTHTGERPYECKHCGKAFSRSSFCREHERTHTGEKPYECKECGKAFSSLSSFNRHKRTHWKDIL.

A KRAB domain is found at 52–138; that stretch reads VAFEDVAVNF…GETLSQIRNS (87 aa). The segment at 189–211 adopts a C2H2-type 1; atypical zinc-finger fold; it reads YTHKQCGKGLSYRHSFQTCERPH. The C2H2-type 2; degenerate zinc-finger motif lies at 217–239; sequence YDCKECGKTFSSPGNLRRHMVVK. 15 C2H2-type zinc fingers span residues 245-267, 273-295, 301-323, 329-351, 357-379, 385-407, 413-435, 441-463, 469-491, 497-518, 524-546, 552-574, 580-602, 608-630, and 636-658; these read YKCE…ERTH, YECK…EKIH, YECK…ERTH, YKCK…ERIH, YTCK…MIMH, HKCK…EGTH, YECK…MMAH, HKCT…ERTH, YECK…ETTH, YKCK…ETTH, YECQ…ERTH, and YECK…KRTH.

This sequence belongs to the krueppel C2H2-type zinc-finger protein family.

The protein localises to the nucleus. In terms of biological role, may be involved in transcriptional regulation. The chain is Zinc finger protein 44 (ZNF44) from Homo sapiens (Human).